Reading from the N-terminus, the 335-residue chain is Glyceraldehyde-3-phosphate dehydrogenase (335 aa).

NAD(+) is bound by residues Thr-11–Ile-12 and Gly-110. D-glyceraldehyde 3-phosphate is bound at residue Ser-139 to Asn-141. Cys-140 functions as the Nucleophile in the catalytic mechanism. Arg-168 contacts NAD(+). His-194–Gly-195 contributes to the D-glyceraldehyde 3-phosphate binding site. Gln-301 provides a ligand contact to NAD(+).

This sequence belongs to the glyceraldehyde-3-phosphate dehydrogenase family. Homotetramer.

Its subcellular location is the cytoplasm. It carries out the reaction D-glyceraldehyde 3-phosphate + phosphate + NADP(+) = (2R)-3-phospho-glyceroyl phosphate + NADPH + H(+). It catalyses the reaction D-glyceraldehyde 3-phosphate + phosphate + NAD(+) = (2R)-3-phospho-glyceroyl phosphate + NADH + H(+). It functions in the pathway carbohydrate degradation; glycolysis; pyruvate from D-glyceraldehyde 3-phosphate: step 1/5. The sequence is that of Glyceraldehyde-3-phosphate dehydrogenase from Halobacterium salinarum (strain ATCC 29341 / DSM 671 / R1).